A 396-amino-acid polypeptide reads, in one-letter code: 8-amino-7-oxononanoate synthase (396 aa).

R19 is a substrate binding site. 106–107 (GY) is a pyridoxal 5'-phosphate binding site. Residue H131 participates in substrate binding. Residues S176, H204, and T233 each contribute to the pyridoxal 5'-phosphate site. K236 carries the N6-(pyridoxal phosphate)lysine modification. Substrate is bound at residue T350.

It belongs to the class-II pyridoxal-phosphate-dependent aminotransferase family. BioF subfamily. Homodimer. Pyridoxal 5'-phosphate serves as cofactor.

It carries out the reaction 6-carboxyhexanoyl-[ACP] + L-alanine + H(+) = (8S)-8-amino-7-oxononanoate + holo-[ACP] + CO2. Its pathway is cofactor biosynthesis; biotin biosynthesis. Its function is as follows. Catalyzes the decarboxylative condensation of pimeloyl-[acyl-carrier protein] and L-alanine to produce 8-amino-7-oxononanoate (AON), [acyl-carrier protein], and carbon dioxide. This is 8-amino-7-oxononanoate synthase from Pseudomonas syringae pv. tomato (strain ATCC BAA-871 / DC3000).